We begin with the raw amino-acid sequence, 647 residues long: ATP-binding protein Uup (647 aa).

ABC transporter domains follow at residues M1–A253 and F320–K546. Residues G36 to S43 and G352 to T359 each bind ATP. The span at A545–S563 shows a compositional bias: basic and acidic residues. A disordered region spans residues A545–K569. Residues N559–A647 form a C-terminal domain (CTD), binds DNA region.

Belongs to the ABC transporter superfamily. ABCF family. Uup subfamily.

The protein resides in the cytoplasm. It catalyses the reaction ATP + H2O = ADP + phosphate + H(+). Probably plays a role in ribosome assembly or function. May be involved in resolution of branched DNA intermediates that result from template switching in postreplication gaps. Binds DNA and has ATPase activity. In Haemophilus influenzae (strain ATCC 51907 / DSM 11121 / KW20 / Rd), this protein is ATP-binding protein Uup.